Reading from the N-terminus, the 305-residue chain is Acetaldehyde dehydrogenase (305 aa).

The active-site Acyl-thioester intermediate is Cys130. NAD(+)-binding positions include 161–169 and Asn272; that span reads SVGPGTRKN.

This sequence belongs to the acetaldehyde dehydrogenase family.

It carries out the reaction acetaldehyde + NAD(+) + CoA = acetyl-CoA + NADH + H(+). This Leptothrix cholodnii (strain ATCC 51168 / LMG 8142 / SP-6) (Leptothrix discophora (strain SP-6)) protein is Acetaldehyde dehydrogenase.